We begin with the raw amino-acid sequence, 40 residues long: Metallothionein-1 (40 aa).

This sequence belongs to the metallothionein superfamily. Type 5 family.

Functionally, this protein binds cations of several transition elements. It is thought to be involved in detoxification processes. The protein is Metallothionein-1 (MtnA) of Drosophila ananassae (Fruit fly).